Here is a 612-residue protein sequence, read N- to C-terminus: Actin-binding LIM protein 2 (612 aa).

LIM zinc-binding domains are found at residues 22–81 (ILCN…LYGT), 81–141 (TRCF…TLLG), 151–210 (RSCG…KFGI), and 210–270 (IRCD…ARTE). Zn(2+) contacts are provided by Cys-83, Cys-86, His-103, Cys-106, Cys-109, Cys-112, Cys-131, and Cys-134. Positions 212, 215, 232, 235, 238, 241, 260, and 263 each coordinate Zn(2+). Residues 269–278 (TEDKSKETRT) are compositionally biased toward basic and acidic residues. Disordered stretches follow at residues 269 to 295 (TEDKSKETRTSSESIVSVPASSTSGSP) and 341 to 433 (AVGD…DNIY). Residues 279-295 (SSESIVSVPASSTSGSP) are compositionally biased toward low complexity. Ser-282, Ser-294, Gly-351, Arg-356, Ser-365, and Ser-368 each carry phosphoserine. Positions 364–373 (SSPSSAGSVS) are enriched in low complexity. The segment covering 394–416 (SGRSTPSLSVHSDSRPPSSTYQQ) has biased composition (polar residues). Ser-453 carries the post-translational modification Phosphoserine. Positions 471–498 (ADTRTNSPDLDSQSLSLSSGTDQEPLQR) are disordered. Thr-473 is modified (phosphothreonine). Residues Ser-477 and Ser-579 each carry the phosphoserine modification. Residues 477–489 (SPDLDSQSLSLSS) are compositionally biased toward low complexity. An HP domain is found at 544-612 (TREYKIYPYD…NDLKKKALLF (69 aa)).

In terms of assembly, interacts with F-actin and ABRA. Expressed in brain. Highly expressed in caudate/putamen, moderately expressed in the olfactory bulb. In the hippocampus, expressed in the CA1, CA2 and CA3 fields. In the cerebellum, expressed in Purkinje cells.

It localises to the cytoplasm. Functionally, may act as scaffold protein. May stimulate ABRA activity and ABRA-dependent SRF transcriptional activity. In Mus musculus (Mouse), this protein is Actin-binding LIM protein 2 (Ablim2).